Here is a 350-residue protein sequence, read N- to C-terminus: MEVRHNWTHAQVRELMEMPFMDLLFEAQQVHRQYHPKNYVQVSTLLSIKTGACPEDCKYCPQSARYQTDVEKERLMEVERVLDAAQKAKNAGSTRFCMGAAWKNPKERDMPLLTDMIKGVKDMGLETCMTLGMLTPEQAKQLASAGLDYYNHNLDTSPEYYGNIITTRTYQDRLDTLSHVRDAGMKICSGGIIGMGESANDRAGLLVELANLPTHPESVPINMLVKVKGTPLETAEEVDPFDFIRLIAVARIMMPTSAVRLSAGRENMNEQMQTLCFMAGANSIFYGCKLLTTPNPSEDKDMQLFNKLGINSQQVSQKPDEITENELLDRVVESVAARPTKDDLFYDASL.

One can recognise a Radical SAM core domain in the interval 38-256 (NYVQVSTLLS…IAVARIMMPT (219 aa)). Cys-53, Cys-57, and Cys-60 together coordinate [4Fe-4S] cluster. Residues Cys-97, Cys-128, Cys-188, and Arg-260 each coordinate [2Fe-2S] cluster.

It belongs to the radical SAM superfamily. Biotin synthase family. As to quaternary structure, homodimer. It depends on [4Fe-4S] cluster as a cofactor. [2Fe-2S] cluster is required as a cofactor.

It carries out the reaction (4R,5S)-dethiobiotin + (sulfur carrier)-SH + 2 reduced [2Fe-2S]-[ferredoxin] + 2 S-adenosyl-L-methionine = (sulfur carrier)-H + biotin + 2 5'-deoxyadenosine + 2 L-methionine + 2 oxidized [2Fe-2S]-[ferredoxin]. It participates in cofactor biosynthesis; biotin biosynthesis; biotin from 7,8-diaminononanoate: step 2/2. Catalyzes the conversion of dethiobiotin (DTB) to biotin by the insertion of a sulfur atom into dethiobiotin via a radical-based mechanism. This Vibrio vulnificus (strain CMCP6) protein is Biotin synthase.